Reading from the N-terminus, the 343-residue chain is Small ribosomal subunit biogenesis GTPase RsgA (343 aa).

Residues 116–275 (RGQLKPVAAN…LIDSPGIREF (160 aa)) form the CP-type G domain. Residues 163–166 (NKAD) and 217–225 (GQSGVGKSS) each bind GTP. Cys-299, Cys-304, His-306, and Cys-312 together coordinate Zn(2+).

It belongs to the TRAFAC class YlqF/YawG GTPase family. RsgA subfamily. In terms of assembly, monomer. Associates with 30S ribosomal subunit, binds 16S rRNA. It depends on Zn(2+) as a cofactor.

The protein localises to the cytoplasm. Functionally, one of several proteins that assist in the late maturation steps of the functional core of the 30S ribosomal subunit. Helps release RbfA from mature subunits. May play a role in the assembly of ribosomal proteins into the subunit. Circularly permuted GTPase that catalyzes slow GTP hydrolysis, GTPase activity is stimulated by the 30S ribosomal subunit. This chain is Small ribosomal subunit biogenesis GTPase RsgA, found in Ectopseudomonas mendocina (strain ymp) (Pseudomonas mendocina).